Reading from the N-terminus, the 150-residue chain is Phosphopantetheine adenylyltransferase (150 aa).

Ser-10 is a binding site for substrate. ATP-binding positions include 10–11 (SF) and His-18. Substrate-binding residues include Lys-42, Thr-74, and Arg-88. ATP contacts are provided by residues 89 to 91 (GLR), Glu-99, and 124 to 130 (LAYISSS).

This sequence belongs to the bacterial CoaD family. In terms of assembly, homohexamer. Mg(2+) serves as cofactor.

It is found in the cytoplasm. It catalyses the reaction (R)-4'-phosphopantetheine + ATP + H(+) = 3'-dephospho-CoA + diphosphate. Its pathway is cofactor biosynthesis; coenzyme A biosynthesis; CoA from (R)-pantothenate: step 4/5. Reversibly transfers an adenylyl group from ATP to 4'-phosphopantetheine, yielding dephospho-CoA (dPCoA) and pyrophosphate. In Cytophaga hutchinsonii (strain ATCC 33406 / DSM 1761 / CIP 103989 / NBRC 15051 / NCIMB 9469 / D465), this protein is Phosphopantetheine adenylyltransferase.